Reading from the N-terminus, the 297-residue chain is tRNA uridine(34) hydroxylase (297 aa).

The Rhodanese domain occupies S133 to L228. C188 (cysteine persulfide intermediate) is an active-site residue.

It belongs to the TrhO family.

The catalysed reaction is uridine(34) in tRNA + AH2 + O2 = 5-hydroxyuridine(34) in tRNA + A + H2O. In terms of biological role, catalyzes oxygen-dependent 5-hydroxyuridine (ho5U) modification at position 34 in tRNAs. The sequence is that of tRNA uridine(34) hydroxylase from Pseudarthrobacter chlorophenolicus (strain ATCC 700700 / DSM 12829 / CIP 107037 / JCM 12360 / KCTC 9906 / NCIMB 13794 / A6) (Arthrobacter chlorophenolicus).